Here is a 390-residue protein sequence, read N- to C-terminus: MEETGAQCAPPPPAGSQTGVSQVNLSAAPSHNCSTEGYVYQDSVALPWKVLLVVLLALITLATTLSNAFVIATVYRTRKLHTPANYLIASLAVTDLLVSILVMPISTMYVVTGRWTLGQVVCDFWLSSDITCCTASILHLCVIALDRYWAITDAVEYSAKRTPKRAAVMIALVWVFSISISLPPFFWRQAKAEEEVLDCLVNTDHILYTVYSTVGAFYFPTLLLIALYSRIYVEARSRILKQTPNRTGKRLTRAQLMTDSPGSTSSVTSINSRAPDVPSESGSPVYVNQVKVRVSDALVEKKKLMAARERKATKTLGIILGAFIVCWLPFFIISLVMPICKDACWFHLAIFDFFTWLGYLNSLINPIIYTMSNEDFKQAFHKLIRFKCAS.

The segment at 1-21 (MEETGAQCAPPPPAGSQTGVS) is disordered. Residues 1 to 46 (MEETGAQCAPPPPAGSQTGVSQVNLSAAPSHNCSTEGYVYQDSVAL) are Extracellular-facing. N-linked (GlcNAc...) asparagine glycosylation is found at Asn24 and Asn32. A helical transmembrane segment spans residues 47 to 72 (PWKVLLVVLLALITLATTLSNAFVIA). At 73–86 (TVYRTRKLHTPANY) the chain is on the cytoplasmic side. Residues 87 to 111 (LIASLAVTDLLVSILVMPISTMYVV) form a helical membrane-spanning segment. Topologically, residues 112–119 (TGRWTLGQ) are extracellular. Residues 120–145 (VVCDFWLSSDITCCTASILHLCVIAL) traverse the membrane as a helical segment. A disulfide bridge links Cys122 with Cys199. Asp129 and Thr134 together coordinate ergotamine. Residues 146 to 148 (DRY) carry the DRY motif; important for ligand-induced conformation changes and signaling motif. The Cytoplasmic segment spans residues 146–165 (DRYWAITDAVEYSAKRTPKR). A helical membrane pass occupies residues 166 to 184 (AAVMIALVWVFSISISLPP). The Extracellular portion of the chain corresponds to 185-205 (FFWRQAKAEEEVLDCLVNTDH). Val201 contributes to the ergotamine binding site. A helical membrane pass occupies residues 206–229 (ILYTVYSTVGAFYFPTLLLIALYS). Residues 230–315 (RIYVEARSRI…AARERKATKT (86 aa)) are Cytoplasmic-facing. The disordered stretch occupies residues 251-282 (LTRAQLMTDSPGSTSSVTSINSRAPDVPSESG). The span at 255 to 272 (QLMTDSPGSTSSVTSINS) shows a compositional bias: polar residues. Residues 316-337 (LGIILGAFIVCWLPFFIISLVM) form a helical membrane-spanning segment. Residues 338–347 (PICKDACWFH) are Extracellular-facing. Residues 348–370 (LAIFDFFTWLGYLNSLINPIIYT) traverse the membrane as a helical segment. The short motif at 365-369 (NPIIY) is the NPxxY motif; important for ligand-induced conformation changes and signaling element. The Cytoplasmic segment spans residues 371–390 (MSNEDFKQAFHKLIRFKCAS). A lipid anchor (S-palmitoyl cysteine) is attached at Cys388.

It belongs to the G-protein coupled receptor 1 family. Homodimer. Heterodimer with HTR1D. In terms of processing, phosphorylated. Desensitization of the receptor may be mediated by its phosphorylation. Post-translationally, palmitoylated.

It localises to the cell membrane. Functionally, G-protein coupled receptor for 5-hydroxytryptamine (serotonin). Also functions as a receptor for ergot alkaloid derivatives, various anxiolytic and antidepressant drugs and other psychoactive substances, such as lysergic acid diethylamide (LSD). Ligand binding causes a conformation change that triggers signaling via guanine nucleotide-binding proteins (G proteins) and modulates the activity of downstream effectors, such as adenylate cyclase. HTR1B is coupled to G(i)/G(o) G alpha proteins and mediates inhibitory neurotransmission by inhibiting adenylate cyclase activity. Arrestin family members inhibit signaling via G proteins and mediate activation of alternative signaling pathways. Regulates the release of 5-hydroxytryptamine, dopamine and acetylcholine in the brain, and thereby affects neural activity, nociceptive processing, pain perception, mood and behavior. Besides, plays a role in vasoconstriction of cerebral arteries. The protein is 5-hydroxytryptamine receptor 1B (HTR1B) of Equus caballus (Horse).